A 447-amino-acid chain; its full sequence is Argininosuccinate synthase (447 aa).

Residues 17–25 (AFSGGLDTS) and A43 each bind ATP. Y99 lines the L-citrulline pocket. ATP is bound by residues G129 and T131. Residues T131, N135, and D136 each contribute to the L-aspartate site. Residue N135 participates in L-citrulline binding. Position 136 (D136) interacts with ATP. The L-citrulline site is built by R139 and S192. D194 provides a ligand contact to ATP. Residues T201, E203, and E280 each coordinate L-citrulline.

It belongs to the argininosuccinate synthase family. Type 2 subfamily. As to quaternary structure, homotetramer.

The protein resides in the cytoplasm. It catalyses the reaction L-citrulline + L-aspartate + ATP = 2-(N(omega)-L-arginino)succinate + AMP + diphosphate + H(+). It participates in amino-acid biosynthesis; L-arginine biosynthesis; L-arginine from L-ornithine and carbamoyl phosphate: step 2/3. The polypeptide is Argininosuccinate synthase (Shigella boydii serotype 18 (strain CDC 3083-94 / BS512)).